Reading from the N-terminus, the 136-residue chain is MRKKHLREANTKLARDLGVAKVELAQEIQKNEDLTAANGRLVTAVNRQVAVNQNLRSENADLRSQLDTARRTFGEAFVKGSLAPVGPNRPNRQKLTEREVRDIREAYRGGMKQKDLADNYGVNPATISRTVRGIYH.

This is Gene 46 protein (46) from Mycobacterium (Mycobacteriophage D29).